Reading from the N-terminus, the 317-residue chain is R-phycoerythrin gamma chain, chloroplastic (317 aa).

The transit peptide at methionine 1 to methionine 40 directs the protein to the chloroplast. Phycourobilin-binding residues include cysteine 94 and cysteine 133. Cysteine 210 contacts (2R,3E)-phycoerythrobilin. Cysteine 297 is a binding site for phycourobilin.

As to quaternary structure, heteromer of 1 alpha, 1 beta and 2 gamma chains. Contains four covalently linked bilin chromophores.

The protein resides in the plastid. Its subcellular location is the chloroplast thylakoid membrane. Its function is as follows. Critical for the incorporation of phycoerythrin in the phycobilisome complex. The chain is R-phycoerythrin gamma chain, chloroplastic from Aglaothamnion neglectum (Red alga).